The chain runs to 482 residues: Major cardiolipin synthase ClsA (482 aa).

A run of 2 helical transmembrane segments spans residues isoleucine 3–isoleucine 23 and tryptophan 34–phenylalanine 54. PLD phosphodiesterase domains are found at residues leucine 217 to tyrosine 244 and aspartate 395 to serine 422. Catalysis depends on residues histidine 222, lysine 224, aspartate 229, histidine 400, lysine 402, and aspartate 407.

It belongs to the phospholipase D family. Cardiolipin synthase subfamily.

The protein localises to the cell membrane. It catalyses the reaction 2 a 1,2-diacyl-sn-glycero-3-phospho-(1'-sn-glycerol) = a cardiolipin + glycerol. Catalyzes the reversible phosphatidyl group transfer from one phosphatidylglycerol molecule to another to form cardiolipin (CL) (diphosphatidylglycerol) and glycerol. The sequence is that of Major cardiolipin synthase ClsA (clsA) from Bacillus subtilis (strain 168).